The primary structure comprises 250 residues: 5-oxoprolinase subunit A (250 aa).

It belongs to the LamB/PxpA family. Forms a complex composed of PxpA, PxpB and PxpC.

It catalyses the reaction 5-oxo-L-proline + ATP + 2 H2O = L-glutamate + ADP + phosphate + H(+). In terms of biological role, catalyzes the cleavage of 5-oxoproline to form L-glutamate coupled to the hydrolysis of ATP to ADP and inorganic phosphate. The chain is 5-oxoprolinase subunit A from Staphylococcus aureus (strain MW2).